The chain runs to 160 residues: Major pollen allergen Bet v 1-G (160 aa).

Residues lysine 55, tyrosine 82, tyrosine 84, and asparagine 101 each contribute to the brassinolide site.

Belongs to the BetVI family.

The protein localises to the cytoplasm. In terms of biological role, may be a general steroid carrier protein. The polypeptide is Major pollen allergen Bet v 1-G (BETV1G) (Betula pendula (European white birch)).